The primary structure comprises 182 residues: ATP-dependent protease subunit HslV (182 aa).

The active site involves T7. G162, C165, and T168 together coordinate Na(+).

The protein belongs to the peptidase T1B family. HslV subfamily. In terms of assembly, a double ring-shaped homohexamer of HslV is capped on each side by a ring-shaped HslU homohexamer. The assembly of the HslU/HslV complex is dependent on binding of ATP.

It localises to the cytoplasm. The catalysed reaction is ATP-dependent cleavage of peptide bonds with broad specificity.. Allosterically activated by HslU binding. In terms of biological role, protease subunit of a proteasome-like degradation complex believed to be a general protein degrading machinery. This is ATP-dependent protease subunit HslV from Legionella pneumophila (strain Lens).